A 256-amino-acid polypeptide reads, in one-letter code: F-actin-capping protein subunit beta (256 aa).

Residue methionine 1 is modified to N-acetylmethionine.

Belongs to the F-actin-capping protein beta subunit family. Component of the F-actin capping complex, composed of a heterodimer of an alpha and a beta subunit.

The protein resides in the cytoplasm. It is found in the cytoskeleton. F-actin-capping proteins bind in a Ca(2+)-independent manner to the fast growing ends of actin filaments (barbed end) thereby blocking the exchange of subunits at these ends. Unlike other capping proteins (such as gelsolin and severin), these proteins do not sever actin filaments. This Arabidopsis thaliana (Mouse-ear cress) protein is F-actin-capping protein subunit beta.